The sequence spans 363 residues: Aminomethyltransferase (363 aa).

This sequence belongs to the GcvT family. As to quaternary structure, the glycine cleavage system is composed of four proteins: P, T, L and H.

It catalyses the reaction N(6)-[(R)-S(8)-aminomethyldihydrolipoyl]-L-lysyl-[protein] + (6S)-5,6,7,8-tetrahydrofolate = N(6)-[(R)-dihydrolipoyl]-L-lysyl-[protein] + (6R)-5,10-methylene-5,6,7,8-tetrahydrofolate + NH4(+). Functionally, the glycine cleavage system catalyzes the degradation of glycine. In Saccharophagus degradans (strain 2-40 / ATCC 43961 / DSM 17024), this protein is Aminomethyltransferase.